The sequence spans 183 residues: ATP synthase subunit b, chloroplastic (183 aa).

A helical membrane pass occupies residues 27–49 (LATNLINLTVVVGVLIYFGKGVL).

It belongs to the ATPase B chain family. In terms of assembly, F-type ATPases have 2 components, F(1) - the catalytic core - and F(0) - the membrane proton channel. F(1) has five subunits: alpha(3), beta(3), gamma(1), delta(1), epsilon(1). F(0) has four main subunits: a(1), b(1), b'(1) and c(10-14). The alpha and beta chains form an alternating ring which encloses part of the gamma chain. F(1) is attached to F(0) by a central stalk formed by the gamma and epsilon chains, while a peripheral stalk is formed by the delta, b and b' chains.

It is found in the plastid. It localises to the chloroplast thylakoid membrane. Functionally, f(1)F(0) ATP synthase produces ATP from ADP in the presence of a proton or sodium gradient. F-type ATPases consist of two structural domains, F(1) containing the extramembraneous catalytic core and F(0) containing the membrane proton channel, linked together by a central stalk and a peripheral stalk. During catalysis, ATP synthesis in the catalytic domain of F(1) is coupled via a rotary mechanism of the central stalk subunits to proton translocation. Component of the F(0) channel, it forms part of the peripheral stalk, linking F(1) to F(0). The polypeptide is ATP synthase subunit b, chloroplastic (Oryza nivara (Indian wild rice)).